Consider the following 198-residue polypeptide: Glycerol-3-phosphate acyltransferase (198 aa).

6 helical membrane passes run 1–21 (MHILIISISYFLGSLPTGFLF), 50–70 (WPAFFVFIIDVGKGLIAVKIA), 77–97 (NLFEVLAGIAAISGHIWPIWL), 111–131 (MFIALSWKIGFASLGIFLIIL), 136–156 (IVSLSSISAAIFLPFLMFLDI), and 157–177 (GSTNHPYFFISLVVSILVIWK).

It belongs to the PlsY family. In terms of assembly, probably interacts with PlsX.

The protein localises to the cell inner membrane. The enzyme catalyses an acyl phosphate + sn-glycerol 3-phosphate = a 1-acyl-sn-glycero-3-phosphate + phosphate. Its pathway is lipid metabolism; phospholipid metabolism. Functionally, catalyzes the transfer of an acyl group from acyl-phosphate (acyl-PO(4)) to glycerol-3-phosphate (G3P) to form lysophosphatidic acid (LPA). This enzyme utilizes acyl-phosphate as fatty acyl donor, but not acyl-CoA or acyl-ACP. The polypeptide is Glycerol-3-phosphate acyltransferase (Prochlorococcus marinus subsp. pastoris (strain CCMP1986 / NIES-2087 / MED4)).